A 307-amino-acid chain; its full sequence is D-alanine--D-alanine ligase (307 aa).

The ATP-grasp domain occupies 101–301 (KTVMRAAGVD…FGELVRWMVE (201 aa)). 127-182 (PLPPPYVVKPIAEGSSVGVIIVRDGRSHPPQILASEEWTFGEQVLAEPYIAGRELT) lines the ATP pocket. Residues Asp-251, Glu-268, and Asn-270 each contribute to the Mg(2+) site.

This sequence belongs to the D-alanine--D-alanine ligase family. It depends on Mg(2+) as a cofactor. Mn(2+) serves as cofactor.

The protein localises to the cytoplasm. The enzyme catalyses 2 D-alanine + ATP = D-alanyl-D-alanine + ADP + phosphate + H(+). Its pathway is cell wall biogenesis; peptidoglycan biosynthesis. In terms of biological role, cell wall formation. This Methylobacterium radiotolerans (strain ATCC 27329 / DSM 1819 / JCM 2831 / NBRC 15690 / NCIMB 10815 / 0-1) protein is D-alanine--D-alanine ligase.